A 354-amino-acid polypeptide reads, in one-letter code: Chorismate synthase (354 aa).

R48 is a binding site for NADP(+). FMN-binding positions include 125–127 (RAS), G277, 292–296 (KPIPS), and R318.

It belongs to the chorismate synthase family. Homotetramer. FMNH2 is required as a cofactor.

The enzyme catalyses 5-O-(1-carboxyvinyl)-3-phosphoshikimate = chorismate + phosphate. It participates in metabolic intermediate biosynthesis; chorismate biosynthesis; chorismate from D-erythrose 4-phosphate and phosphoenolpyruvate: step 7/7. Its function is as follows. Catalyzes the anti-1,4-elimination of the C-3 phosphate and the C-6 proR hydrogen from 5-enolpyruvylshikimate-3-phosphate (EPSP) to yield chorismate, which is the branch point compound that serves as the starting substrate for the three terminal pathways of aromatic amino acid biosynthesis. This reaction introduces a second double bond into the aromatic ring system. The polypeptide is Chorismate synthase (Nitratidesulfovibrio vulgaris (strain DP4) (Desulfovibrio vulgaris)).